The sequence spans 69 residues: DNA gyrase inhibitor YacG (69 aa).

Zn(2+) contacts are provided by cysteine 7, cysteine 10, cysteine 26, and cysteine 30.

Belongs to the DNA gyrase inhibitor YacG family. As to quaternary structure, interacts with GyrB. Requires Zn(2+) as cofactor.

Inhibits all the catalytic activities of DNA gyrase by preventing its interaction with DNA. Acts by binding directly to the C-terminal domain of GyrB, which probably disrupts DNA binding by the gyrase. In Shewanella baltica (strain OS155 / ATCC BAA-1091), this protein is DNA gyrase inhibitor YacG.